The chain runs to 99 residues: Transcription factor 1 (99 aa).

May be involved in preference for HM-URA DNA stretches follow at residues 52-77 (PVAR…SVGV) and 90-99 (EGLKYEDFAK). DNA-binding regions lie at residues F61 and 93-94 (KY).

The protein belongs to the bacterial histone-like protein family. Homodimer.

In terms of biological role, selectively binds to and inhibits the transcription of hydroxymethyluracil-(hmUra)-containing DNA, such as SP01 DNA, by RNA polymerase in vitro. The protein is Transcription factor 1 (TF1) of Bacillus phage SP01 (Bacteriophage SP01).